A 106-amino-acid polypeptide reads, in one-letter code: RNA-binding protein Hfq (106 aa).

The Sm domain occupies 9–68 (DPYLNALRKERVPVSIYLVNGIKLQGQIESFDAFVILLRNNISQMVYKHAVSTIVPSRNI). The interval 78 to 106 (EDEAGEEISAEYTPNAEGQAEATADPLYD) is disordered.

It belongs to the Hfq family. As to quaternary structure, homohexamer.

In terms of biological role, RNA chaperone that binds small regulatory RNA (sRNAs) and mRNAs to facilitate mRNA translational regulation in response to envelope stress, environmental stress and changes in metabolite concentrations. Also binds with high specificity to tRNAs. The sequence is that of RNA-binding protein Hfq from Dichelobacter nodosus (strain VCS1703A).